The following is a 394-amino-acid chain: Na(+)/H(+) antiporter NhaA (394 aa).

The next 11 membrane-spanning stretches (helical) occupy residues 24–44, 58–78, 96–116, 126–146, 155–175, 180–200, 214–234, 267–287, 300–320, 336–356, and 370–390; these read AGLV…SPLA, LSVQ…LVGL, TLPG…YVML, GWAI…SLLG, IFLA…IAIF, INVA…SLCA, AVLW…GVLL, VAFA…FASI, VAAG…ALMV, VLGV…IGLL, and GILA…RIAG.

It belongs to the NhaA Na(+)/H(+) (TC 2.A.33) antiporter family.

It is found in the cell inner membrane. The catalysed reaction is Na(+)(in) + 2 H(+)(out) = Na(+)(out) + 2 H(+)(in). Functionally, na(+)/H(+) antiporter that extrudes sodium in exchange for external protons. This Azorhizobium caulinodans (strain ATCC 43989 / DSM 5975 / JCM 20966 / LMG 6465 / NBRC 14845 / NCIMB 13405 / ORS 571) protein is Na(+)/H(+) antiporter NhaA.